The following is a 429-amino-acid chain: High mobility group nucleosome-binding domain-containing protein 5 (429 aa).

The disordered stretch occupies residues 1–429; that stretch reads MPKRKAAGDA…GEKGEPVSTV (429 aa). Phosphothreonine is present on Thr29. Basic residues predominate over residues 35–44; sequence KRASTSRKTK. Lys64 participates in a covalent cross-link: Glycyl lysine isopeptide (Lys-Gly) (interchain with G-Cter in SUMO2). Position 90 is a phosphoserine (Ser90). 2 stretches are compositionally biased toward basic and acidic residues: residues 92 to 101 and 109 to 124; these read METEEVKEQI and GGEK…KNDE. Residue Lys98 forms a Glycyl lysine isopeptide (Lys-Gly) (interchain with G-Cter in SUMO1); alternate linkage. Lys98 is covalently cross-linked (Glycyl lysine isopeptide (Lys-Gly) (interchain with G-Cter in SUMO2); alternate). Lys121 is covalently cross-linked (Glycyl lysine isopeptide (Lys-Gly) (interchain with G-Cter in SUMO2)). Residues 133–152 show a composition bias toward acidic residues; sequence EKDEDEKEHEDTGEEGEDGE. Residues 153-195 show a composition bias toward basic and acidic residues; sequence REGGLKEKPDVAEIEDAKEAKDDEEKEDKEKEDDKGGDGKKEE. Over residues 196-209 the composition is skewed to acidic residues; the sequence is EKDDEGEAETEEEV. 2 stretches are compositionally biased toward basic and acidic residues: residues 210 to 387 and 413 to 429; these read KEQQ…NEDR and NKDF…VSTV.

Belongs to the HMGN family. Expressed in trophoblast giant cells.

The protein localises to the nucleus. Preferentially binds to euchromatin and modulates cellular transcription by counteracting linker histone-mediated chromatin compaction. This Rattus norvegicus (Rat) protein is High mobility group nucleosome-binding domain-containing protein 5.